The primary structure comprises 258 residues: Type III pantothenate kinase (258 aa).

7-14 (DVGNTRLK) is a binding site for ATP. Substrate-binding positions include Y96 and 103-106 (GADR). The Proton acceptor role is filled by D105. T133 contributes to the ATP binding site. Residue T183 coordinates substrate.

This sequence belongs to the type III pantothenate kinase family. As to quaternary structure, homodimer. It depends on NH4(+) as a cofactor. The cofactor is K(+).

Its subcellular location is the cytoplasm. The catalysed reaction is (R)-pantothenate + ATP = (R)-4'-phosphopantothenate + ADP + H(+). It participates in cofactor biosynthesis; coenzyme A biosynthesis; CoA from (R)-pantothenate: step 1/5. Its function is as follows. Catalyzes the phosphorylation of pantothenate (Pan), the first step in CoA biosynthesis. This Acidovorax ebreus (strain TPSY) (Diaphorobacter sp. (strain TPSY)) protein is Type III pantothenate kinase.